Consider the following 72-residue polypeptide: SRY-related protein AES6 (72 aa).

Positions 1-69 form a DNA-binding region, HMG box; the sequence is VKRPMNAFMV…KHMADYPDYK (69 aa).

The protein localises to the nucleus. The protein is SRY-related protein AES6 of Alligator mississippiensis (American alligator).